The primary structure comprises 443 residues: 26S proteasome regulatory subunit 4 homolog A (443 aa).

Disordered regions lie at residues 1–55 (MGQG…LPTV) and 87–108 (RLKPQEEKAEEDRSKVDDLRGT). Composition is skewed to basic and acidic residues over residues 12–28 (QGDRKPDGGDKKEKKFE) and 87–106 (RLKPQEEKAEEDRSKVDDLR). 229-236 (GEPGTGKT) provides a ligand contact to ATP. Glycyl lysine isopeptide (Lys-Gly) (interchain with G-Cter in ubiquitin) cross-links involve residues Lys296 and Lys433.

Belongs to the AAA ATPase family. Component of the 19S regulatory particle (RP/PA700) base subcomplex of the 26S proteasome. The 26S proteasome is composed of a core protease (CP), known as the 20S proteasome, capped at one or both ends by the 19S regulatory particle (RP/PA700). The RP/PA700 complex is composed of at least 17 different subunits in two subcomplexes, the base and the lid, which form the portions proximal and distal to the 20S proteolytic core, respectively. Required for innate immunity. Interacts with UNI. In terms of tissue distribution, preferentially expressed in the root and shoot apical meristem.

It is found in the cytoplasm. It localises to the P-body. Its subcellular location is the nucleus. Its function is as follows. The 26S protease is involved in the ATP-dependent degradation of ubiquitinated proteins. The regulatory (or ATPase) complex confers ATP dependency and substrate specificity to the 26S complex. Interacts with transit peptides of proteins targeted to the chloroplast, and may be involved in the degradation of unimported plastid protein precursors. Is required for the maintenance of postembryonic root and shoot meristems. Has a specific role in the regulation of organs size. Acts redundantly with RPT2B in the regulation of gametogenesis. With RPT2B plays a critical role in 26S proteasome assembly. Acts as an upstream signaling component for inducing both defense and morphological phenotypes in the constitutive active uni-1D mutant. Acts as a negative regulator of endoreduplication in trichome cells. May function after the completion of the third endoreduplication step (8C to 16C) mediated by RHL1. Acts as a negative regulator of transcriptional gene silencing (TGS) at specific endogenous genes through DNA methylation. Promotes post-transcriptional gene silencing (PTGS) by limiting the degradation of transgene aberrant RNAs by the RNA quality control (RQC) machinery, thus favoring their entry into cytoplasmic siRNA bodies where they can trigger PTGS. Involved in tolerance to zinc deficiency, possibly through alleviation of oxidative stresses or processing of poly-ubiquitinated proteins. Required for resistance to the fungal pathogen Golovinomyces cichoracearum. The protein is 26S proteasome regulatory subunit 4 homolog A of Arabidopsis thaliana (Mouse-ear cress).